The chain runs to 163 residues: Halocyanin (163 aa).

The first 24 residues, 1 to 24, serve as a signal peptide directing secretion; the sequence is MKDISRRRFVLGTGATVAAATLAG. Cysteine 25 is subject to N-acetylcysteine. Cysteine 25 carries S-archaeol cysteine lipidation. Positions 26 to 38 are enriched in gly residues; it reads NGNGNGNGNGNGN. The interval 26–48 is disordered; the sequence is NGNGNGNGNGNGNGEPDTPEGRA. In terms of domain architecture, Plastocyanin-like spans 48-163; sequence ADQFLTDNDA…QGMYGAVIVE (116 aa). Positions 110, 148, 151, and 156 each coordinate Cu cation.

It localises to the cell membrane. Functionally, electron donor. Binds one copper ion. The sequence is that of Halocyanin (hcy) from Natronomonas pharaonis (Natronobacterium pharaonis).